Here is a 381-residue protein sequence, read N- to C-terminus: Fatty acid elongase 6 (381 aa).

Transmembrane regions (helical) follow at residues 10-30 (IAAAIEVPDWVLTKSAALVYS), 69-89 (LPYLNPWHVIASILAYLSLIV), 107-127 (GLVHNLGLHLLSLYMSLGLMI), 153-173 (LIWLFYVSKVVEWVDTVIMLL), 182-202 (FLHVYHHTTVFVLWWLALLVA), 216-236 (GVHVFMYGYYFLTLLFPSGIV), and 280-300 (LLQILFWYMISLLALFGNFLV). Positions 184–188 (HVYHH) match the HxxHH motif motif. The Nucleophile role is filled by His187. The segment at 362 to 381 (RKNGNGNGQKASLQAMAGSR) is disordered.

The protein belongs to the ELO family.

The protein localises to the membrane. It participates in lipid metabolism; polyunsaturated fatty acid biosynthesis. Involved in the synthesis of fatty acids. Elongates C18 polyunsaturated fatty acids (PUFAs) with a preference for Delta6 PUFAs. This is Fatty acid elongase 6 from Leishmania major.